The following is a 291-amino-acid chain: Pyridoxal kinase PdxY (291 aa).

Residues Ser-9 and 44–45 contribute to the substrate site; that span reads TQ. ATP-binding positions include Asp-112, Val-144, Glu-149, Lys-182, and 207 to 210; that span reads RPHL. Asp-221 lines the substrate pocket.

The protein belongs to the pyridoxine kinase family. PdxY subfamily. As to quaternary structure, homodimer. The cofactor is Mg(2+).

It catalyses the reaction pyridoxal + ATP = pyridoxal 5'-phosphate + ADP + H(+). It functions in the pathway cofactor metabolism; pyridoxal 5'-phosphate salvage; pyridoxal 5'-phosphate from pyridoxal: step 1/1. Functionally, pyridoxal kinase involved in the salvage pathway of pyridoxal 5'-phosphate (PLP). Catalyzes the phosphorylation of pyridoxal to PLP. The sequence is that of Pyridoxal kinase PdxY from Photobacterium profundum (strain SS9).